We begin with the raw amino-acid sequence, 450 residues long: Solute carrier family 52, riboflavin transporter, member 2 (450 aa).

Transmembrane regions (helical) follow at residues 14 to 34, 47 to 67, 79 to 99, 114 to 136, and 147 to 167; these read LLVALFGMGSWIAVNGIWVEL, LPSYLSVLVALGNLGLLLVTL, IPIQVVQGLSIVGTGLLAPLW, FLTLAFVLALSCCASNVTFLPFL, and FFLGQGLSALLPCVLALAQGV. N178 carries an N-linked (GlcNAc...) asparagine glycan. The helical transmembrane segment at 201 to 221 threads the bilayer; it reads FFWVLTALLGTSAAAFQGLLL. Residues 230-268 are disordered; sequence ATMGTGLRVETPGTEEEEEEEEASPLQEPPGQVASIVSS. The segment covering 242–252 has biased composition (acidic residues); the sequence is GTEEEEEEEEA. The next 5 membrane-spanning stretches (helical) occupy residues 282 to 302, 317 to 337, 344 to 364, 371 to 391, and 409 to 429; these read ACLLGLLAITNALTNGVLPAV, LAVVLGSSANPLACFLAMAVL, LYGLCLLGMFFGTYLMTLAVL, VGTSAGVVLVVLSWVLCAGVF, and ALLAAGVAIQVGSLLGAIAMF.

This sequence belongs to the riboflavin transporter family. Highly expressed in the placenta and small intestine, moderately in the kidney, colon, lung, prostate, uterus, and thymus, and weakly in all other tissues.

The protein localises to the cell membrane. The enzyme catalyses riboflavin(in) = riboflavin(out). Its activity is regulated as follows. Riboflavin transport is Na(+)-independent but moderately pH-sensitive. Activity is strongly inhibited by riboflavin analogs, such as lumiflavin. Weakly inhibited by flavin adenine dinucleotide (FAD) and flavin mononucleotide (FMN). In terms of biological role, plasma membrane transporter mediating the uptake by cells of the water soluble vitamin B2/riboflavin that plays a key role in biochemical oxidation-reduction reactions of the carbohydrate, lipid, and amino acid metabolism. May also act as a receptor for 4-hydroxybutyrate. This chain is Solute carrier family 52, riboflavin transporter, member 2 (Slc52a2), found in Rattus norvegicus (Rat).